The primary structure comprises 206 residues: Imidazoleglycerol-phosphate dehydratase (206 aa).

The tract at residues 1-21 is disordered; the sequence is MTTPSTAPTPAPRKAEVSRNT.

It belongs to the imidazoleglycerol-phosphate dehydratase family.

It is found in the cytoplasm. It catalyses the reaction D-erythro-1-(imidazol-4-yl)glycerol 3-phosphate = 3-(imidazol-4-yl)-2-oxopropyl phosphate + H2O. It functions in the pathway amino-acid biosynthesis; L-histidine biosynthesis; L-histidine from 5-phospho-alpha-D-ribose 1-diphosphate: step 6/9. The chain is Imidazoleglycerol-phosphate dehydratase from Polaromonas sp. (strain JS666 / ATCC BAA-500).